We begin with the raw amino-acid sequence, 516 residues long: UDP-N-acetylmuramyl-tripeptide synthetase (516 aa).

UDP-N-acetyl-alpha-D-muramoyl-L-alanyl-D-glutamate is bound at residue Ser-36. 113-119 contributes to the ATP binding site; the sequence is GTKGKTT. Residues 159–160, Ser-186, and Arg-194 each bind UDP-N-acetyl-alpha-D-muramoyl-L-alanyl-D-glutamate; that span reads TT. Residue Lys-228 is modified to N6-carboxylysine.

It belongs to the MurCDEF family. MurE subfamily. Carboxylation is probably crucial for Mg(2+) binding and, consequently, for the gamma-phosphate positioning of ATP.

It localises to the cytoplasm. Its pathway is cell wall biogenesis; peptidoglycan biosynthesis. In terms of biological role, catalyzes the addition of an amino acid to the nucleotide precursor UDP-N-acetylmuramoyl-L-alanyl-D-glutamate (UMAG) in the biosynthesis of bacterial cell-wall peptidoglycan. The chain is UDP-N-acetylmuramyl-tripeptide synthetase from Limosilactobacillus reuteri (strain DSM 20016) (Lactobacillus reuteri).